A 1242-amino-acid chain; its full sequence is MHWQEGGGRGCVYTHGNCRRNLTARALQALQHVEALTCHYCVSLLHLLPLLLMWMPPVCADDSAVTVNVLSMMYNPEYYVEKVNAINAGFDASLSAHGWKTGSGATISVIRPPSYNTTAEDIFQLGVKQSEGKLLVVFGPLGTDPVVWVRDKLKENDLVAIAPIAYSSEVRGWNPHLYSISVEPNAELLALIRYAVVYLGLPRVGLMYAKGNGFDKESYEFTMRIMEIMGRKPCGVFAVESSGGRDVLEGQLNTKWGQFVATRPQAVLLFSSLEEETTGWFVKKIAQDNRTVDMYLLAPSSFQHFLIKTWSDALVSLNRTFTPGQLITTGTVPLASDNRSSMVRHFQRDMDNYLDTNSDWKGFAKPEHYLKDDKLGEMMVFGWLAGEVLFEALNNAPQLTNRTSFMESLYKQRRYVIDDFVVGDFGGECDEALHYRVPCVIAIKAAAWTHMRVVDDSLSLKPMKKGSVTWSVSECSSANVQVSAPLIGLYVVLTDDKVAQRASMRWSLGARSIEEADDVDKRIFFHSLKVNLKNLTQSLEQVRDTKAVAAVLGVTADILSVPNMTFIGPIPLFPRLNKFWRNVIHLQPLLAHELYVLAVYLSNTSSTGVKALVRGGEASEVVDTLDKSLVTFGVSLDSSKTLGDGDPMSSYLSGNGDVFCIGLTPPDVAAVARHLQTHLRARVFVPFNDILLFYQEFVAGFNASKESIASSEGLLFATSFPHWGKKNRKSDMVARFHRHVNESHWDPLTFLGFATTRLLQVVISNMRKVNAEPLADRIYTESNIRVDDVGFGPFSDAECVSGTSVSANECASNFGATNISVWSMGACAEFKLAQDTGWDDTVYGLCYSARGSTHTVTDSWNNFWVCIRLVIIYCPWCVPTHLPAERRNNNRAPKEPTDPVTLIFTDIESSTALWAAHPDLMPDAVAAHHRMVRSLIGRYKCYEVKTVGDSFMIASKSPFAAVQLAQELQLCFLHHDWGTNALDDSYREFEEQRAEGECEYTPPTAHMDPEVYSRLWNGLRVRVGIHTGLCDIIRHDEVTKGYDYYGRTPNMAARTESVANGGQVLMTHAAYMSLSAEDRKQIDVTALGDVALRGVSDPVKMYQLNTVPSRNFAALRLDREYFFDEGEDGTTTSTSDHSSSRADVSESGQIIATALQSLLSTFKTAHREKLLLPYCERWRVPLPRKAASEWDDAYCEEVVRRIAVKVGRVADHGADSGSESSSTQGSSSIIIVPFYDMHLQEY.

At M1–H39 the chain is on the cytoplasmic side. A helical transmembrane segment spans residues Y40 to A60. At D61–N862 the chain is on the extracellular side. 11 N-linked (GlcNAc...) asparagine glycosylation sites follow: N116, N289, N318, N338, N401, N534, N563, N603, N702, N741, and N818. A helical transmembrane segment spans residues F863–P883. Over A884–Y1242 the chain is Cytoplasmic. The region spanning T901 to E1056 is the Guanylate cyclase domain. Mg(2+) contacts are provided by D906 and D949.

The protein belongs to the adenylyl cyclase class-3 family. The cofactor is Mg(2+).

The protein localises to the membrane. The enzyme catalyses ATP = 3',5'-cyclic AMP + diphosphate. Could act as a receptor for an unknown ligand. The polypeptide is Receptor-type adenylate cyclase GRESAG 4.1 (GRESAG 4.1) (Trypanosoma brucei brucei).